An 875-amino-acid chain; its full sequence is uncharacterized protein (875 aa).

The disordered stretch occupies residues 83 to 149 (PFQPPPPQPF…QPPQPPPQQL (67 aa)). Over residues 101–147 (QQPPQPPPDQPQQPQPPQQPPQQPPQQQPQPPQPPQQPPQPPQPPPQ) the composition is skewed to pro residues.

This is an uncharacterized protein from Orgyia pseudotsugata multicapsid polyhedrosis virus (OpMNPV).